Here is a 332-residue protein sequence, read N- to C-terminus: Probable sugar phosphate/phosphate translocator At1g53660 (332 aa).

Helical transmembrane passes span 19-39 (ASILLYITLSSGQIFFNKWVL), 46-66 (FPYPLGLTLLHMTFSSVLCFL), 82-102 (LEIYVTSVIPIGAMFAMTLWL), 120-140 (AIMPVAVFILGVCVGLEIMSC), 143-163 (LLIMSVISFGVLVSSYGELNI), 165-185 (WVGVVYQMGGIVSEALRLILM), 199-219 (LSLMYYMSPCSAICLFIPWIF), 233-253 (LVLSLNSLCTFALNLSVFLVI), 259-281 (LTIRIAGVVKDWLVVLVSALLFA), and 285-304 (LTIINLFGYAVAIVGVATYN). Residues 312 to 322 (ESITLVSQSPK) show a composition bias toward polar residues. A disordered region spans residues 312–332 (ESITLVSQSPKNSDKKPDGPL). Residues 323-332 (NSDKKPDGPL) are compositionally biased toward basic and acidic residues.

Belongs to the TPT transporter family. TPT (TC 2.A.7.9) subfamily.

Its subcellular location is the membrane. In Arabidopsis thaliana (Mouse-ear cress), this protein is Probable sugar phosphate/phosphate translocator At1g53660.